Consider the following 1023-residue polypeptide: Probable beta-glucosidase E (1023 aa).

Residues 1–51 (MPKSYTPVHDSIPEEDHFSSDDESNFRLHRIDRSASRSQSPKENEGEPSIL) form a disordered region. Over 1–128 (MPKSYTPVHD…AVYYSKTWWR (128 aa)) the chain is Cytoplasmic. Positions 11-45 (SIPEEDHFSSDDESNFRLHRIDRSASRSQSPKENE) are enriched in basic and acidic residues. Residues 129 to 149 (TLVVVIIALGLLVWGFLKYAS) traverse the membrane as a helical; Signal-anchor for type II membrane protein segment. Residues 150–1023 (TRGDIWEEYD…NLPLGKPFDP (874 aa)) are Extracellular-facing. Asparagine 199 and asparagine 387 each carry an N-linked (GlcNAc...) asparagine glycan. The active site involves aspartate 415. Asparagine 458 and asparagine 497 each carry an N-linked (GlcNAc...) asparagine glycan. 2 disordered regions span residues 485-515 (WESPAPDGDGGPNFSSWTDDEFGFRYPGSPG) and 822-841 (NPSRLPAARPPDAVAPPSYD). The span at 827–838 (PAARPPDAVAPP) shows a compositional bias: low complexity. Residue asparagine 848 is glycosylated (N-linked (GlcNAc...) asparagine). The segment at 873 to 909 (ATTPPPPNPEASGSATDQKPHRTKPSDAGGGAGGNPS) is disordered. Asparagine 964 and asparagine 979 each carry an N-linked (GlcNAc...) asparagine glycan.

Belongs to the glycosyl hydrolase 3 family.

It localises to the cell membrane. It catalyses the reaction Hydrolysis of terminal, non-reducing beta-D-glucosyl residues with release of beta-D-glucose.. It functions in the pathway glycan metabolism; cellulose degradation. Functionally, beta-glucosidases are one of a number of cellulolytic enzymes involved in the degradation of cellulosic biomass. Catalyzes the last step releasing glucose from the inhibitory cellobiose. In Emericella nidulans (strain FGSC A4 / ATCC 38163 / CBS 112.46 / NRRL 194 / M139) (Aspergillus nidulans), this protein is Probable beta-glucosidase E (bglE).